A 226-amino-acid polypeptide reads, in one-letter code: Large ribosomal subunit protein uL1 (226 aa).

Belongs to the universal ribosomal protein uL1 family. In terms of assembly, part of the 50S ribosomal subunit.

In terms of biological role, binds directly to 23S rRNA. The L1 stalk is quite mobile in the ribosome, and is involved in E site tRNA release. Its function is as follows. Protein L1 is also a translational repressor protein, it controls the translation of the L11 operon by binding to its mRNA. The polypeptide is Large ribosomal subunit protein uL1 (Borreliella afzelii (strain PKo) (Borrelia afzelii)).